The chain runs to 184 residues: dITP/XTP pyrophosphatase (184 aa).

Position 8-13 (8-13 (TGNKGK)) interacts with substrate. The Mg(2+) site is built by Glu37 and Asp66. Asp66 functions as the Proton acceptor in the catalytic mechanism. Substrate contacts are provided by residues Ser67, 142–145 (FGYD), Lys163, and 168–169 (HR).

The protein belongs to the HAM1 NTPase family. Homodimer. The cofactor is Mg(2+).

It carries out the reaction XTP + H2O = XMP + diphosphate + H(+). The catalysed reaction is dITP + H2O = dIMP + diphosphate + H(+). The enzyme catalyses ITP + H2O = IMP + diphosphate + H(+). In terms of biological role, pyrophosphatase that catalyzes the hydrolysis of nucleoside triphosphates to their monophosphate derivatives, with a high preference for the non-canonical purine nucleotides XTP (xanthosine triphosphate), dITP (deoxyinosine triphosphate) and ITP. Seems to function as a house-cleaning enzyme that removes non-canonical purine nucleotides from the nucleotide pool, thus preventing their incorporation into DNA/RNA and avoiding chromosomal lesions. The chain is dITP/XTP pyrophosphatase from Methanosarcina mazei (strain ATCC BAA-159 / DSM 3647 / Goe1 / Go1 / JCM 11833 / OCM 88) (Methanosarcina frisia).